Here is a 162-residue protein sequence, read N- to C-terminus: Protein-export protein SecB (162 aa).

It belongs to the SecB family. As to quaternary structure, homotetramer, a dimer of dimers. One homotetramer interacts with 1 SecA dimer.

It is found in the cytoplasm. Functionally, one of the proteins required for the normal export of preproteins out of the cell cytoplasm. It is a molecular chaperone that binds to a subset of precursor proteins, maintaining them in a translocation-competent state. It also specifically binds to its receptor SecA. The protein is Protein-export protein SecB of Pseudomonas syringae pv. syringae (strain B728a).